The primary structure comprises 284 residues: Cell division protein ZipA (284 aa).

Met1 is a topological domain (periplasmic). The chain crosses the membrane as a helical span at residues Glu2–Phe22. The Cytoplasmic segment spans residues Asp23–Arg284. Residues Pro47–Pro140 form a disordered region. Composition is skewed to basic and acidic residues over residues Leu62–Leu75, Arg83–Gln102, and Ser119–Pro140.

The protein belongs to the ZipA family. Interacts with FtsZ via their C-terminal domains.

It localises to the cell inner membrane. Functionally, essential cell division protein that stabilizes the FtsZ protofilaments by cross-linking them and that serves as a cytoplasmic membrane anchor for the Z ring. Also required for the recruitment to the septal ring of downstream cell division proteins. This chain is Cell division protein ZipA, found in Pseudomonas fluorescens (strain ATCC BAA-477 / NRRL B-23932 / Pf-5).